We begin with the raw amino-acid sequence, 495 residues long: Internal alternative NAD(P)H-ubiquinone oxidoreductase A1, mitochondrial (495 aa).

The transit peptide at 1–41 directs the protein to the mitochondrion; the sequence is MPWFKNLIKISKTITNQSSSYKSITPLASPLLTQFLQFTKQ. 61-91 contacts FAD; that stretch reads RIVVLGSGWAGCRLMKDIDTNIYDVVCVSPR. Residue 228–264 participates in NAD(+) binding; the sequence is LHCVVVGGGPTGVEFSGELSDFILKDVHQRYAHVKDY. A Microbody targeting signal motif is present at residues 486-495; that stretch reads LVFGRDISRI.

The protein belongs to the NADH dehydrogenase family. The cofactor is FAD.

The protein localises to the mitochondrion inner membrane. It localises to the peroxisome. The catalysed reaction is a quinone + NADH + H(+) = a quinol + NAD(+). It catalyses the reaction a ubiquinone + NADH + H(+) = a ubiquinol + NAD(+). In terms of biological role, alternative NADH-ubiquinone oxidoreductase which catalyzes the oxidation of mitochondrial NADH does not translocate protons across the inner mitochondrial membrane. This is Internal alternative NAD(P)H-ubiquinone oxidoreductase A1, mitochondrial (NDA1) from Solanum tuberosum (Potato).